The sequence spans 298 residues: ADP/ATP translocase 1 (298 aa).

The Mitochondrial intermembrane portion of the chain corresponds to 1 to 7; the sequence is MGDHAWS. Gly-2 carries the post-translational modification N-acetylglycine. The Solcar 1 repeat unit spans residues 6–98; that stretch reads WSFLKDFLAG…FAFKDKYKQL (93 aa). Ser-7 is modified (phosphoserine). Residues 8–37 traverse the membrane as a helical segment; that stretch reads FLKDFLAGGVAAAVSKTAVAPIERVKLLLQ. Residues 38–74 lie on the Mitochondrial matrix side of the membrane; it reads VQHASKQISAEKQYKGIIDCVVRIPKEQGFLSFWRGN. Lys-52 carries the N6,N6,N6-trimethyllysine modification. The helical transmembrane segment at 75 to 99 threads the bilayer; the sequence is LANVIRYFPTQALNFAFKDKYKQLF. Arg-80 and Lys-92 together coordinate ADP. Over 100–109 the chain is Mitochondrial intermembrane; the sequence is LGGVDRHKQF. The helical transmembrane segment at 110–130 threads the bilayer; the sequence is WRYFAGNLASGGAAGATSLCF. Solcar repeat units lie at residues 111-201 and 212-297; these read RYFA…AKGM and VSWM…IKKY. Residues 131 to 178 are Mitochondrial matrix-facing; that stretch reads VYPLDFARTRLAADVGKGAAQREFHGLGDCIIKIFKSDGLRGLYQGFN. An N6-succinyllysine modification is found at Lys-147. The residue at position 160 (Cys-160) is an S-nitrosocysteine. Residues 179–199 traverse the membrane as a helical segment; sequence VSVQGIIIYRAAYFGVYDTAK. Residues 200–210 are Mitochondrial intermembrane-facing; it reads GMLPDPKNVHI. A helical transmembrane segment spans residues 211-231; it reads FVSWMIAQSVTAVAGLVSYPF. Topologically, residues 232-273 are mitochondrial matrix; it reads DTVRRRMMMQSGRKGADIMYTGTVDCWRKIAKDEGAKAFFKG. Arg-235 serves as a coordination point for ADP. Positions 235–240 are important for transport activity; sequence RRRMMM. Positions 235–240 match the Nucleotide carrier signature motif motif; sequence RRRMMM. An N6-succinyllysine mark is found at Lys-245 and Lys-272. Residues 274–291 form a helical membrane-spanning segment; sequence AWSNVLRGMGGAFVLVLY. The Mitochondrial intermembrane portion of the chain corresponds to 292–298; it reads DEIKKYV.

Belongs to the mitochondrial carrier (TC 2.A.29) family. In terms of assembly, monomer. Found in a complex with ARL2, ARL2BP and SLC25A4/ANT1. Interacts with ARL2BP. Interacts with ARHGAP11B, thereby inhibiting the mitochondrial permeability transition pore (mPTP). Interacts with TIMM44; leading to inhibit the presequence translocase TIMM23, thereby promoting stabilization of PINK1. (Microbial infection) Interacts with HIV-1 Vpr. Post-translationally, under cell death induction, transglutaminated by TGM2. Transglutamination leads to formation of covalent cross-links between a glutamine and the epsilon-amino group of a lysine residue, forming polymers. As to expression, expressed in erythrocytes (at protein level).

It localises to the mitochondrion inner membrane. Its subcellular location is the membrane. The enzyme catalyses ADP(in) + ATP(out) = ADP(out) + ATP(in). The catalysed reaction is H(+)(in) = H(+)(out). The matrix-open state (m-state) is inhibited by the membrane-permeable bongkrekic acid (BKA). The cytoplasmic-open state (c-state) is inhibited by the membrane-impermeable toxic inhibitor carboxyatractyloside (CATR). Proton transporter activity is inhibited by ADP:ATP antiporter activity. Functionally, ADP:ATP antiporter that mediates import of ADP into the mitochondrial matrix for ATP synthesis, and export of ATP out to fuel the cell. Cycles between the cytoplasmic-open state (c-state) and the matrix-open state (m-state): operates by the alternating access mechanism with a single substrate-binding site intermittently exposed to either the cytosolic (c-state) or matrix (m-state) side of the inner mitochondrial membrane. In addition to its ADP:ATP antiporter activity, also involved in mitochondrial uncoupling and mitochondrial permeability transition pore (mPTP) activity. Plays a role in mitochondrial uncoupling by acting as a proton transporter: proton transport uncouples the proton flows via the electron transport chain and ATP synthase to reduce the efficiency of ATP production and cause mitochondrial thermogenesis. Proton transporter activity is inhibited by ADP:ATP antiporter activity, suggesting that SLC25A4/ANT1 acts as a master regulator of mitochondrial energy output by maintaining a delicate balance between ATP production (ADP:ATP antiporter activity) and thermogenesis (proton transporter activity). Proton transporter activity requires free fatty acids as cofactor, but does not transport it. Also plays a key role in mPTP opening, a non-specific pore that enables free passage of the mitochondrial membranes to solutes of up to 1.5 kDa, and which contributes to cell death. It is however unclear if SLC25A4/ANT1 constitutes a pore-forming component of mPTP or regulates it. Acts as a regulator of mitophagy independently of ADP:ATP antiporter activity: promotes mitophagy via interaction with TIMM44, leading to inhibit the presequence translocase TIMM23, thereby promoting stabilization of PINK1. This is ADP/ATP translocase 1 from Homo sapiens (Human).